Reading from the N-terminus, the 362-residue chain is 45 kDa calcium-binding protein (362 aa).

An N-terminal signal peptide occupies residues 1–36; sequence MVWPWVAMASRWGPLIGLAPCCLWLLGAVLLMDASA. Residue Asn40 is glycosylated (N-linked (GlcNAc...) asparagine). EF-hand domains are found at residues 98–133 and 137–172; these read RSRR…KTAE and EAME…SKGH. Ser99 carries the phosphoserine modification. Asp111, Asn113, Asp115, Lys117, Glu122, Asp150, Asp152, Asp154, His156, and Glu161 together coordinate Ca(2+). Residue Thr193 is modified to Phosphothreonine. EF-hand domains are found at residues 197 to 232, 233 to 268, 278 to 313, and 314 to 349; these read LENL…HSRG, MLRF…TVEN, WVKD…MNEY, and NALN…FTGS. Asp213 is a binding site for Ca(2+). Thr217 is subject to Phosphothreonine. Ca(2+) is bound by residues Glu220, Asp246, Asp248, Asp250, Gln252, and Glu257. Thr265 bears the Phosphothreonine mark. Asp291, Asn293, and Asp295 together coordinate Ca(2+). Phosphothreonine is present on Thr299. The Ca(2+) site is built by Glu302, Asp327, Asn329, Asn331, His333, and Glu338. The interval 309-362 is necessary for intracellular retention in Golgi apparatus lumen; the sequence is PMNEYNALNEAKQMIAVADENQNHHLEPEEVLKYSEFFTGSKLVDYARSVHEEF.

This sequence belongs to the CREC family. Isoform 5 interacts with STXBP1; the interaction is enhanced in presence of calcium. Isoform 5 interacts with STX3. In terms of tissue distribution, ubiquitous. Isoform 5 is expressed in pancreas.

The protein resides in the golgi apparatus lumen. The protein localises to the cytoplasm. Its subcellular location is the cell membrane. It is found in the cell projection. It localises to the bleb. May regulate calcium-dependent activities in the endoplasmic reticulum lumen or post-ER compartment. Its function is as follows. Isoform 5 may be involved in the exocytosis of zymogens by pancreatic acini. The polypeptide is 45 kDa calcium-binding protein (SDF4) (Homo sapiens (Human)).